The primary structure comprises 320 residues: MARKKIALIGSGMIGGTLAHMIGLKELGDVVLFDIEEGMPQGKALDIAESSPVDGFDVSLTGANVYEAIEGADVVIVTAGVARKPGMSRDDLLGINLKVMEQVGAGIKKYASSAFVICITNPLDAMVWALQKFSGLPKQKVVGMAGVLDSARFRYFLSKEFKVSVKDVTAFVLGGHGDSMVPLVRYSTVGGISLPDLVKMGWTTQEKIDQIIQRVRNGGAEIVGLLKTGSAFYAPAASAISMAEAYLKDIKRVVPVATYLSGEYGVKDTYVGVPVVLGAGGVERVIEIDLDKKERSAFEQSVNAVKKLCEACIAIAPCLK.

Residues 10–15 and Asp34 each bind NAD(+); that span reads GSGMIG. The substrate site is built by Arg83 and Arg89. Residues Asn96 and 119–121 each bind NAD(+); that span reads ITN. Substrate-binding residues include Asn121 and Arg152. The active-site Proton acceptor is the His176.

It belongs to the LDH/MDH superfamily. MDH type 3 family.

The enzyme catalyses (S)-malate + NAD(+) = oxaloacetate + NADH + H(+). Its function is as follows. Catalyzes the reversible oxidation of malate to oxaloacetate. In Bartonella quintana (strain Toulouse) (Rochalimaea quintana), this protein is Malate dehydrogenase.